The chain runs to 279 residues: uncharacterized protein (279 aa).

Positions 1–19 (MKLKLYLIPLLASGIILSA) are cleaved as a signal peptide. C20 carries N-palmitoyl cysteine lipidation. C20 is lipidated: S-diacylglycerol cysteine.

The protein belongs to the MG439/MG440 family.

The protein resides in the cell membrane. This is an uncharacterized protein from Mycoplasma pneumoniae (strain ATCC 29342 / M129 / Subtype 1) (Mycoplasmoides pneumoniae).